A 192-amino-acid chain; its full sequence is Probable apo-citrate lyase phosphoribosyl-dephospho-CoA transferase (192 aa).

The protein belongs to the CitX family.

The catalysed reaction is apo-[citrate lyase ACP] + 2'-(5''-triphospho-alpha-D-ribosyl)-3'-dephospho-CoA = holo-[citrate lyase ACP] + diphosphate. Its function is as follows. Transfers 2-(5''-triphosphoribosyl)-3'-dephosphocoenzyme-A on a serine residue to the apo-acyl carrier protein (gamma chain) of the citrate lyase to yield holo-acyl carrier protein. This is Probable apo-citrate lyase phosphoribosyl-dephospho-CoA transferase from Streptococcus pyogenes serotype M3 (strain ATCC BAA-595 / MGAS315).